Reading from the N-terminus, the 790-residue chain is Sorting nexin mvp1 (790 aa).

Polar residues-rich tracts occupy residues 1-10 and 20-40; these read MSLFGSSPPN and KTAN…TRSG. Disordered regions lie at residues 1–62, 215–342, and 373–406; these read MSLF…RKQR, PNLS…SIHN, and AITG…HVRS. A compositionally biased stretch (pro residues) spans 225–240; sequence PQRPVTPPKAPTPSPP. A compositionally biased stretch (low complexity) spans 241 to 252; that stretch reads KQQQQQQHQPPT. The span at 269 to 283 shows a compositional bias: basic and acidic residues; it reads DLHKGHNHGPLEHST. Polar residues predominate over residues 297-319; sequence NDLNGNDAVSYSTSPEVTTTSSA. Low complexity-rich tracts occupy residues 324-339 and 386-400; these read TTST…GPSS and QSVS…PNRS. The 115-residue stretch at 411–525 folds into the PX domain; it reads EENILVTLMP…IMFLTVPTEL (115 aa). A 1,2-diacyl-sn-glycero-3-phospho-(1D-myo-inositol-3-phosphate) is bound by residues Arg447, Ser449, Lys473, and Arg492.

Belongs to the sorting nexin family.

Its subcellular location is the cytoplasm. It is found in the membrane. In terms of biological role, required for vacuolar protein sorting. The sequence is that of Sorting nexin mvp1 (vsp-1) from Neurospora crassa (strain ATCC 24698 / 74-OR23-1A / CBS 708.71 / DSM 1257 / FGSC 987).